Consider the following 188-residue polypeptide: Adenylate kinase (188 aa).

12-17 (GSGKTT) provides a ligand contact to ATP. Positions 33–62 (STGDLLRAEVASGSELGKKIDSFISKGNLV) are NMP. Residues threonine 34, arginine 39, 60–62 (NLV), 87–90 (GYPR), and glutamine 94 each bind AMP. The interval 129-135 (GRARGAD) is LID. Arginine 130 contacts ATP. Positions 132 and 144 each coordinate AMP. Arginine 172 contacts ATP.

Belongs to the adenylate kinase family. As to quaternary structure, monomer.

The protein localises to the cytoplasm. The catalysed reaction is AMP + ATP = 2 ADP. It functions in the pathway purine metabolism; AMP biosynthesis via salvage pathway; AMP from ADP: step 1/1. In terms of biological role, catalyzes the reversible transfer of the terminal phosphate group between ATP and AMP. Plays an important role in cellular energy homeostasis and in adenine nucleotide metabolism. The protein is Adenylate kinase of Campylobacter curvus (strain 525.92).